Here is a 499-residue protein sequence, read N- to C-terminus: Cytochrome P450 71A27 (499 aa).

The helical transmembrane segment at 3–23 (MILISLCLTTLLAFLFLKPLL) threads the bilayer. Cys438 lines the heme pocket.

It belongs to the cytochrome P450 family. Heme is required as a cofactor.

The protein localises to the membrane. The sequence is that of Cytochrome P450 71A27 (CYP71A27) from Arabidopsis thaliana (Mouse-ear cress).